The primary structure comprises 418 residues: Serine hydroxymethyltransferase (418 aa).

(6S)-5,6,7,8-tetrahydrofolate contacts are provided by residues Leu117 and 121–123; that span reads GHL. N6-(pyridoxal phosphate)lysine is present on Lys225.

Belongs to the SHMT family. In terms of assembly, homodimer. The cofactor is pyridoxal 5'-phosphate.

The protein localises to the cytoplasm. It catalyses the reaction (6R)-5,10-methylene-5,6,7,8-tetrahydrofolate + glycine + H2O = (6S)-5,6,7,8-tetrahydrofolate + L-serine. It functions in the pathway one-carbon metabolism; tetrahydrofolate interconversion. The protein operates within amino-acid biosynthesis; glycine biosynthesis; glycine from L-serine: step 1/1. Catalyzes the reversible interconversion of serine and glycine with tetrahydrofolate (THF) serving as the one-carbon carrier. This reaction serves as the major source of one-carbon groups required for the biosynthesis of purines, thymidylate, methionine, and other important biomolecules. Also exhibits THF-independent aldolase activity toward beta-hydroxyamino acids, producing glycine and aldehydes, via a retro-aldol mechanism. This Mycoplasma mobile (strain ATCC 43663 / 163K / NCTC 11711) (Mesomycoplasma mobile) protein is Serine hydroxymethyltransferase.